The primary structure comprises 122 residues: NADPH-dependent 7-cyano-7-deazaguanine reductase (122 aa).

The active-site Thioimide intermediate is the cysteine 34. The active-site Proton donor is aspartate 41. Substrate is bound by residues 56 to 58 (VEL) and 75 to 76 (HE).

It belongs to the GTP cyclohydrolase I family. QueF type 1 subfamily.

It localises to the cytoplasm. The enzyme catalyses 7-aminomethyl-7-carbaguanine + 2 NADP(+) = 7-cyano-7-deazaguanine + 2 NADPH + 3 H(+). It participates in tRNA modification; tRNA-queuosine biosynthesis. Its function is as follows. Catalyzes the NADPH-dependent reduction of 7-cyano-7-deazaguanine (preQ0) to 7-aminomethyl-7-deazaguanine (preQ1). In Anaeromyxobacter sp. (strain Fw109-5), this protein is NADPH-dependent 7-cyano-7-deazaguanine reductase.